A 202-amino-acid chain; its full sequence is MKPVKIGVAGPVGSGKTALIDRLAKAMRDRYNLAVITNDVYTYEDAEFLVRSGALPPERIAGVRTGGCPHTAIREDPAANQEAVEAMLARFLDLDILFLESGGDNLAASFSPELVDVWIYVIDVAAGDKIPRKGGPGIEKSHLLVINKIDLAPLVGADLGVMERDTRLKRGSRPWVFTNLKTGEGLDSVVEWIRREVLFEGD.

GTP is bound at residue 10–17 (GPVGSGKT).

Belongs to the SIMIBI class G3E GTPase family. UreG subfamily. In terms of assembly, homodimer. UreD, UreF and UreG form a complex that acts as a GTP-hydrolysis-dependent molecular chaperone, activating the urease apoprotein by helping to assemble the nickel containing metallocenter of UreC. The UreE protein probably delivers the nickel.

It localises to the cytoplasm. Functionally, facilitates the functional incorporation of the urease nickel metallocenter. This process requires GTP hydrolysis, probably effectuated by UreG. The sequence is that of Urease accessory protein UreG from Synechococcus sp. (strain JA-3-3Ab) (Cyanobacteria bacterium Yellowstone A-Prime).